Here is a 263-residue protein sequence, read N- to C-terminus: Probable HTH-type transcriptional regulator ArcR (263 aa).

The region spanning 14 to 74 is the HTH iclR-type domain; that stretch reads ITSVLNAVEI…DGDGTYQLGD (61 aa). Residues 35–54 constitute a DNA-binding region (H-T-H motif); it reads LQELTTELDLTKATIHTYMA. The 174-residue stretch at 89 to 262 folds into the IclR-ED domain; it reads LYRLGREEID…ANIIEVRLET (174 aa).

In terms of biological role, probably regulates transcription of the arcABC operon. In Halobacterium salinarum (strain ATCC 29341 / DSM 671 / R1), this protein is Probable HTH-type transcriptional regulator ArcR (arcR).